The following is a 1567-amino-acid chain: ABC multidrug transporter MDR1 (1567 aa).

The span at 1–11 (MASQPPQPPSG) shows a compositional bias: pro residues. The tract at residues 1-37 (MASQPPQPPSGQPDTQYEEYQSEVITETTNRPTPAAD) is disordered. Over residues 22-32 (SEVITETTNRP) the composition is skewed to polar residues. Residues N149, N157, and N356 are each glycosylated (N-linked (GlcNAc...) asparagine). The region spanning 167-432 (VQYQDTFLSP…FEEMGWYCPP (266 aa)) is the ABC transporter 1 domain. The next 6 helical transmembrane spans lie at 543–563 (STIA…SLFF), 571–591 (GFFA…LMSI), 636–656 (IPIK…LGGL), 661–681 (AKFF…SAIF), 691–711 (IPQA…YTGF), and 798–818 (LGIL…VSEL). N819, N895, and N912 each carry an N-linked (GlcNAc...) asparagine glycan. The ABC transporter 2 domain maps to 891–1134 (FTWRNVTYDI…LLNYFETHGA (244 aa)). 927–934 (GVSGAGKT) contributes to the ATP binding site. The disordered stretch occupies residues 1172–1202 (ESRHVQQELDRIQSETSKRNEGHGQSAEKEP). Residues 1231–1251 (IWGKLLLGLTSALFIGFSFFL) traverse the membrane as a helical segment. An N-linked (GlcNAc...) asparagine glycan is attached at N1253. Transmembrane regions (helical) follow at residues 1257–1277 (AGLQ…SSLV), 1305–1325 (VFLL…GIIA), 1345–1365 (ILLL…QMII), 1372–1392 (ETAG…NGVL), and 1498–1518 (GIGW…YYLI).

This sequence belongs to the ABC transporter superfamily. ABCG family. PDR (TC 3.A.1.205) subfamily.

It is found in the cell membrane. It carries out the reaction voriconazole(in) + ATP + H2O = voriconazole(out) + ADP + phosphate + H(+). It catalyses the reaction fluconazole(in) + ATP + H2O = fluconazole(out) + ADP + phosphate + H(+). The enzyme catalyses (R)-miconazole(in) + ATP + H2O = (R)-miconazole(out) + ADP + phosphate + H(+). The catalysed reaction is (S)-miconazole(in) + ATP + H2O = (S)-miconazole(out) + ADP + phosphate + H(+). In terms of biological role, pleiotropic ABC efflux transporter that may be involved in the modulation susceptibility to a wide range of unrelated cytotoxic compounds. The chain is ABC multidrug transporter MDR1 from Trichophyton equinum (strain ATCC MYA-4606 / CBS 127.97) (Horse ringworm fungus).